We begin with the raw amino-acid sequence, 265 residues long: Type II pantothenate kinase (265 aa).

Residue 6 to 13 participates in ATP binding; the sequence is DAGGTLIK. Catalysis depends on Glu-70, which acts as the Proton acceptor. Residues Thr-99, 121 to 125, Tyr-137, and Ser-225 contribute to the ATP site; that span reads GGMIQ.

Belongs to the type II pantothenate kinase family. Homodimer.

The protein resides in the cytoplasm. The catalysed reaction is (R)-pantothenate + ATP = (R)-4'-phosphopantothenate + ADP + H(+). The protein operates within cofactor biosynthesis; coenzyme A biosynthesis; CoA from (R)-pantothenate: step 1/5. Functionally, catalyzes the phosphorylation of pantothenate (Pan), the first step in CoA biosynthesis. The chain is Type II pantothenate kinase from Staphylococcus epidermidis (strain ATCC 35984 / DSM 28319 / BCRC 17069 / CCUG 31568 / BM 3577 / RP62A).